We begin with the raw amino-acid sequence, 165 residues long: uncharacterized protein (165 aa).

Residues 8 to 159 form the N-acetyltransferase domain; it reads LLVNYKTLEE…QGVQEQTTKP (152 aa).

This is an uncharacterized protein from Shouchella clausii (strain KSM-K16) (Alkalihalobacillus clausii).